The chain runs to 68 residues: Alpha-conotoxin-like Mr1.2 (68 aa).

The signal sequence occupies residues 1–21 (MGMRMMFTVFLLVVLATTVVS). Residues 22 to 48 (FTSDRGSDGRNAAAKDKASDLVALTVK) constitute a propeptide that is removed on maturation. Disulfide bonds link Cys-50–Cys-56 and Cys-51–Cys-64. The ser-Xaa-Pro motif, crucial for potent interaction with nAChR stretch occupies residues 52–54 (SNP). Position 65 is an asparagine amide (Asn-65).

It belongs to the conotoxin A superfamily. Expressed by the venom duct.

The protein resides in the secreted. Its function is as follows. Alpha-conotoxins act on postsynaptic membranes, they bind to the nicotinic acetylcholine receptors (nAChR) and thus inhibit them. This Conus marmoreus (Marble cone) protein is Alpha-conotoxin-like Mr1.2.